The primary structure comprises 229 residues: MAKLTKKQKEAASKIEKNKLYSLKDAAALLKVVASAKFDESVDIAVRLGVDPRKANQMVRGVVTLPHGTGKDVKVLALVTPDKEAEAREAGADHVGLDDYLQKIKDGWTDVDVIITMPAVMGKLGPLGRILGPRGLMPNPKTGTVTMDVAKAVQEVKAGKIDFKVDKTGIVHAGIGKVSFGAEQIVDNAHEIIQTLIKLKPTAAKGTYIKGIHLTSTMSPAIALDPKAV.

It belongs to the universal ribosomal protein uL1 family. In terms of assembly, part of the 50S ribosomal subunit.

Functionally, binds directly to 23S rRNA. The L1 stalk is quite mobile in the ribosome, and is involved in E site tRNA release. Its function is as follows. Protein L1 is also a translational repressor protein, it controls the translation of the L11 operon by binding to its mRNA. The sequence is that of Large ribosomal subunit protein uL1 from Flavobacterium johnsoniae (strain ATCC 17061 / DSM 2064 / JCM 8514 / BCRC 14874 / CCUG 350202 / NBRC 14942 / NCIMB 11054 / UW101) (Cytophaga johnsonae).